A 316-amino-acid polypeptide reads, in one-letter code: DNA-directed RNA polymerase III subunit RPC6 (316 aa).

Ala-2 bears the N-acetylalanine mark. Glycyl lysine isopeptide (Lys-Gly) (interchain with G-Cter in SUMO2) cross-links involve residues Lys-5 and Lys-7. The [4Fe-4S] cluster site is built by Cys-287, Cys-290, Cys-296, and Cys-307.

The protein belongs to the eukaryotic RPC34/RPC39 RNA polymerase subunit family. In terms of assembly, component of the RNA polymerase III complex consisting of 17 subunits: a ten-subunit horseshoe-shaped catalytic core composed of POLR3A/RPC1, POLR3B/RPC2, POLR1C/RPAC1, POLR1D/RPAC2, POLR3K/RPC10, POLR2E/RPABC1, POLR2F/RPABC2, POLR2H/RPABC3, POLR2K/RPABC4 and POLR2L/RPABC5; a mobile stalk composed of two subunits POLR3H/RPC8 and CRCP/RPC9, protruding from the core and functioning primarily in transcription initiation; and additional subunits homologous to general transcription factors of the RNA polymerase II machinery, POLR3C/RPC3-POLR3F/RPC6-POLR3G/RPC7 heterotrimer required for transcription initiation and POLR3D/RPC4-POLR3E/RPC5 heterodimer involved in both transcription initiation and termination. Directly interacts with POLR3C. Interacts with TBP and TFIIIB90 and GTF3C4. Interacts with MAF1. As part of the RNA polymerase III complex, interacts with PKP2.

It localises to the nucleus. In terms of biological role, DNA-dependent RNA polymerase catalyzes the transcription of DNA into RNA using the four ribonucleoside triphosphates as substrates. Specific peripheric component of RNA polymerase III (Pol III) which synthesizes small non-coding RNAs including 5S rRNA, snRNAs, tRNAs and miRNAs from at least 500 distinct genomic loci. Part of POLR3C/RPC3-POLR3F/RPC6-POLR3G/RPC7 heterotrimer that coordinates the dynamics of Pol III stalk and clamp modules during the transition from apo to elongation state. Pol III plays a key role in sensing and limiting infection by intracellular bacteria and DNA viruses, including varicella zoster virus. Acts as a nuclear and cytosolic DNA sensor detecting AT-rich DNA, involved in innate immune response. Can sense non-self dsDNA that serves as template for transcription into dsRNA. The non-self RNA polymerase III transcripts, such as Epstein-Barr virus-encoded RNAs (EBERs) induce type I interferon and NF-kappa-B through the RIG-I pathway. Preferentially binds double-stranded DNA (dsDNA). The sequence is that of DNA-directed RNA polymerase III subunit RPC6 from Homo sapiens (Human).